The chain runs to 322 residues: Phosphatidylserine decarboxylase proenzyme (322 aa).

Catalysis depends on charge relay system; for autoendoproteolytic cleavage activity residues aspartate 90, histidine 147, and serine 254. Serine 254 functions as the Schiff-base intermediate with substrate; via pyruvic acid; for decarboxylase activity in the catalytic mechanism. Serine 254 is subject to Pyruvic acid (Ser); by autocatalysis. Residues 293 to 322 (PDAEPAPLPAEEIEAEHDASPLIDDKKDQV) form a disordered region. Residues 308-322 (EHDASPLIDDKKDQV) are compositionally biased toward basic and acidic residues.

Belongs to the phosphatidylserine decarboxylase family. PSD-B subfamily. Prokaryotic type I sub-subfamily. As to quaternary structure, heterodimer of a large membrane-associated beta subunit and a small pyruvoyl-containing alpha subunit. Pyruvate is required as a cofactor. Post-translationally, is synthesized initially as an inactive proenzyme. Formation of the active enzyme involves a self-maturation process in which the active site pyruvoyl group is generated from an internal serine residue via an autocatalytic post-translational modification. Two non-identical subunits are generated from the proenzyme in this reaction, and the pyruvate is formed at the N-terminus of the alpha chain, which is derived from the carboxyl end of the proenzyme. The autoendoproteolytic cleavage occurs by a canonical serine protease mechanism, in which the side chain hydroxyl group of the serine supplies its oxygen atom to form the C-terminus of the beta chain, while the remainder of the serine residue undergoes an oxidative deamination to produce ammonia and the pyruvoyl prosthetic group on the alpha chain. During this reaction, the Ser that is part of the protease active site of the proenzyme becomes the pyruvoyl prosthetic group, which constitutes an essential element of the active site of the mature decarboxylase.

The protein localises to the cell membrane. It catalyses the reaction a 1,2-diacyl-sn-glycero-3-phospho-L-serine + H(+) = a 1,2-diacyl-sn-glycero-3-phosphoethanolamine + CO2. It participates in phospholipid metabolism; phosphatidylethanolamine biosynthesis; phosphatidylethanolamine from CDP-diacylglycerol: step 2/2. Its function is as follows. Catalyzes the formation of phosphatidylethanolamine (PtdEtn) from phosphatidylserine (PtdSer). This Escherichia coli O127:H6 (strain E2348/69 / EPEC) protein is Phosphatidylserine decarboxylase proenzyme.